Consider the following 355-residue polypeptide: Glutamyl aminopeptidase (355 aa).

The a divalent metal cation site is built by His65 and Asp181. Glu213 acts as the Proton acceptor in catalysis. Positions 214, 236, and 319 each coordinate a divalent metal cation.

It belongs to the peptidase M42 family. It depends on a divalent metal cation as a cofactor.

The enzyme catalyses Release of N-terminal glutamate (and to a lesser extent aspartate) from a peptide.. The sequence is that of Glutamyl aminopeptidase (pepA) from Lactococcus lactis subsp. cremoris (strain MG1363).